The following is a 138-amino-acid chain: Glutaredoxin-C7 (138 aa).

The tract at residues 17 to 40 is disordered; sequence SSTRGGGGGGMLGLTLFDPPGGEQ. In terms of domain architecture, Glutaredoxin spans 42-137; that stretch reads AERIGRLVRE…PRLREVGALC (96 aa). Cysteine 62 and cysteine 65 form a disulfide bridge.

This sequence belongs to the glutaredoxin family. CC-type subfamily.

The protein resides in the cytoplasm. In terms of biological role, has a glutathione-disulfide oxidoreductase activity in the presence of NADPH and glutathione reductase. Reduces low molecular weight disulfides and proteins. This chain is Glutaredoxin-C7 (GRXC7), found in Oryza sativa subsp. japonica (Rice).